A 174-amino-acid polypeptide reads, in one-letter code: uncharacterized protein (174 aa).

2 helical membrane passes run 29 to 51 (FAVE…GFWY) and 66 to 83 (VIVI…VTKI).

It is found in the cell membrane. This is an uncharacterized protein from Bacillus subtilis (strain 168).